A 444-amino-acid polypeptide reads, in one-letter code: Phosphoglucosamine mutase (444 aa).

Catalysis depends on Ser-104, which acts as the Phosphoserine intermediate. 4 residues coordinate Mg(2+): Ser-104, Asp-243, Asp-245, and Asp-247. At Ser-104 the chain carries Phosphoserine.

This sequence belongs to the phosphohexose mutase family. It depends on Mg(2+) as a cofactor. Post-translationally, activated by phosphorylation.

It catalyses the reaction alpha-D-glucosamine 1-phosphate = D-glucosamine 6-phosphate. Its function is as follows. Catalyzes the conversion of glucosamine-6-phosphate to glucosamine-1-phosphate. This Neisseria meningitidis serogroup C (strain 053442) protein is Phosphoglucosamine mutase.